Here is a 676-residue protein sequence, read N- to C-terminus: DNA ligase (676 aa).

NAD(+) is bound by residues 35–39, 84–85, and Glu-115; these read DAVYD and SL. The N6-AMP-lysine intermediate role is filled by Lys-117. 4 residues coordinate NAD(+): Arg-138, Glu-177, Lys-296, and Lys-320. Residues Cys-414, Cys-417, Cys-432, and Cys-437 each coordinate Zn(2+). In terms of domain architecture, BRCT spans 599–676; sequence NANLKLVGKT…SEAELLKILA (78 aa).

Belongs to the NAD-dependent DNA ligase family. LigA subfamily. The cofactor is Mg(2+). Mn(2+) serves as cofactor.

The catalysed reaction is NAD(+) + (deoxyribonucleotide)n-3'-hydroxyl + 5'-phospho-(deoxyribonucleotide)m = (deoxyribonucleotide)n+m + AMP + beta-nicotinamide D-nucleotide.. Functionally, DNA ligase that catalyzes the formation of phosphodiester linkages between 5'-phosphoryl and 3'-hydroxyl groups in double-stranded DNA using NAD as a coenzyme and as the energy source for the reaction. It is essential for DNA replication and repair of damaged DNA. The sequence is that of DNA ligase from Trichormus variabilis (strain ATCC 29413 / PCC 7937) (Anabaena variabilis).